Here is a 309-residue protein sequence, read N- to C-terminus: Peptide methionine sulfoxide reductase MsrA/MsrB (309 aa).

Residues 1–153 (MIYLAEGCFW…PNGYCHIDIN (153 aa)) are peptide methionine sulfoxide reductase A. Residue Cys8 is part of the active site. Positions 170–293 (ATEIKAKLSA…NSLSITFIPK (124 aa)) constitute a MsrB domain. The Nucleophile role is filled by Cys282.

The protein in the N-terminal section; belongs to the MsrA Met sulfoxide reductase family. This sequence in the C-terminal section; belongs to the MsrB Met sulfoxide reductase family.

It catalyses the reaction L-methionyl-[protein] + [thioredoxin]-disulfide + H2O = L-methionyl-(S)-S-oxide-[protein] + [thioredoxin]-dithiol. It carries out the reaction [thioredoxin]-disulfide + L-methionine + H2O = L-methionine (S)-S-oxide + [thioredoxin]-dithiol. The enzyme catalyses L-methionyl-[protein] + [thioredoxin]-disulfide + H2O = L-methionyl-(R)-S-oxide-[protein] + [thioredoxin]-dithiol. Functionally, has an important function as a repair enzyme for proteins that have been inactivated by oxidation. Catalyzes the reversible oxidation-reduction of methionine sulfoxide in proteins to methionine. The protein is Peptide methionine sulfoxide reductase MsrA/MsrB (msrAB) of Streptococcus pyogenes serotype M3 (strain ATCC BAA-595 / MGAS315).